A 335-amino-acid chain; its full sequence is Probable calcium-binding protein CML49 (335 aa).

Over residues 1 to 10 (MSGYPPSSQG) the composition is skewed to low complexity. The disordered stretch occupies residues 1–154 (MSGYPPSSQG…PQASYGSPFA (154 aa)). Pro residues predominate over residues 30–45 (NPPPYGSSGSNPPPPY). Residues 46–63 (GSSASSPYAVPYGAQPAP) are compositionally biased toward low complexity. The segment covering 110–141 (DYGGYGGAPQQSGHGGGYGGAPQQSGHGGGYG) has biased composition (gly residues). EF-hand domains follow at residues 164–199 (GTDP…YNQS) and 230–265 (FSLQ…LGFS). Residues aspartate 177, aspartate 179, serine 181, glutamate 188, aspartate 243, aspartate 245, serine 247, arginine 249, and glutamate 254 each contribute to the Ca(2+) site.

Its function is as follows. Potential calcium sensor. This Arabidopsis thaliana (Mouse-ear cress) protein is Probable calcium-binding protein CML49 (CML49).